A 441-amino-acid polypeptide reads, in one-letter code: MDKTSQLPDELLVKVLSFLPTKDAVRTSLLSMRWKSLWMWLPKLEYDFRHYSVSEGQGLARFITLSLLGHKAPAIESLSLKLRYGAIGSIKPEDIYLWVSLAVHDSNVRELSLKLCTFAERPTKLPKSLYKCKSIVILKLKDEILVDVPRKVCLPSLKTLFLGRVTYSDEDSLHRLLSNCPVLEDLVVERDRIDNLGKLSVVVKSLQRLTLKMSCPCHLDGIMMNTPSLKYLKVTDERQESDSDNESDSDSPRYFYDFEDMPKLEEADFVLTFQNIKKFFKFVTSIKRLSLCLGVYTEESLYHEGLVFNQLEQLKICSCDSDWSILLSRLLESSPNLRELEAYVIEDHPDRRVDLPNQWGNQLNCVPKCLLSSLETFKWSEMYGLLQNQMDVAKYILRNARCLKSATIFFPTTYAKETRDEMIEELSLSFQGPETCQVFFH.

An F-box domain is found at 1–47 (MDKTSQLPDELLVKVLSFLPTKDAVRTSLLSMRWKSLWMWLPKLEYD). LRR repeat units follow at residues 57–82 (QGLA…SLKL), 87–115 (IGSI…SLKL), 137–164 (ILKL…FLGR), 165–190 (VTYS…VVER), 211–236 (LKMS…KVTD), 243–271 (SDNE…DFVL), 293–318 (LGVY…KICS), and 319–344 (CDSD…EAYV). The FBD domain occupies 358 to 410 (QWGNQLNCVPKCLLSSLETFKWSEMYGLLQNQMDVAKYILRNARCLKSATIFF).

The sequence is that of Putative F-box/FBD/LRR-repeat protein At4g00315 from Arabidopsis thaliana (Mouse-ear cress).